Consider the following 1279-residue polypeptide: Myosin-1 (1279 aa).

Basic residues predominate over residues 1-12 (MAIVKRGGRTRA). Residues 1–25 (MAIVKRGGRTRAKQQQAPAKVNNGL) form a disordered region. Residues 48 to 736 (VGVSDLTLLS…TLFALEDMRD (689 aa)) enclose the Myosin motor domain. An ATP-binding site is contributed by 141-148 (GESGAGKT). The residue at position 371 (S371) is a Phosphoserine. Residues 419–502 (SIGILDIYGF…PGLFAALNDS (84 aa)) form an actin-binding region. IQ domains are found at residues 740-760 (HNMA…KEDA) and 761-786 (AKTI…YGNS). Residues 794–984 (RRRFSMLGSR…SGTVTVNQGL (191 aa)) form the TH1 domain. Polar residues-rich tracts occupy residues 980 to 989 (VNQGLPPTSK) and 1018 to 1027 (AFQSQPTASY). Disordered regions lie at residues 980–1001 (VNQG…LGKV), 1014–1132 (LAQP…PKHP), 1189–1216 (SPSA…SSNT), and 1253–1279 (LADA…DDDW). Composition is skewed to low complexity over residues 1038–1056 (TQLY…PTRT) and 1067–1095 (STQT…KKIA). A compositionally biased stretch (pro residues) spans 1116 to 1126 (APPPPPPPPAL). One can recognise an SH3 domain in the interval 1129–1189 (PKHPTYRAMY…PIDYLQEESS (61 aa)). Over residues 1189–1209 (SPSASAATQSYAPTTASSNPV) the composition is skewed to polar residues. Acidic residues predominate over residues 1268–1279 (SDAEDDDDDDDW).

Belongs to the TRAFAC class myosin-kinesin ATPase superfamily. Myosin family. In terms of processing, phosphorylation of the TEDS site (Ser-371) is required for the polarization of the actin cytoskeleton. Phosphorylation probably activates the myosin-I ATPase activity.

It localises to the cytoplasm. It is found in the cytoskeleton. The protein localises to the actin patch. Functionally, type-I myosin implicated in the organization of the actin cytoskeleton. Required for proper actin cytoskeleton polarization. At the cell cortex, assembles in patch-like structures together with proteins from the actin-polymerizing machinery and promotes actin assembly. Functions as actin nucleation-promoting factor (NPF) for the Arp2/3 complex. The sequence is that of Myosin-1 (MYO1) from Lodderomyces elongisporus (strain ATCC 11503 / CBS 2605 / JCM 1781 / NBRC 1676 / NRRL YB-4239) (Yeast).